We begin with the raw amino-acid sequence, 407 residues long: Argininosuccinate synthase (407 aa).

Residues 16–24 and Ala-44 each bind ATP; that span reads AYSGGLDTS. Residues Tyr-96 and Ser-101 each coordinate L-citrulline. Gly-126 contributes to the ATP binding site. L-aspartate-binding residues include Thr-128, Asn-132, and Asp-133. Asn-132 serves as a coordination point for L-citrulline. Arg-136, Ser-185, Ser-194, Glu-270, and Tyr-282 together coordinate L-citrulline.

It belongs to the argininosuccinate synthase family. Type 1 subfamily. Homotetramer.

The protein resides in the cytoplasm. The enzyme catalyses L-citrulline + L-aspartate + ATP = 2-(N(omega)-L-arginino)succinate + AMP + diphosphate + H(+). It participates in amino-acid biosynthesis; L-arginine biosynthesis; L-arginine from L-ornithine and carbamoyl phosphate: step 2/3. This chain is Argininosuccinate synthase, found in Shewanella denitrificans (strain OS217 / ATCC BAA-1090 / DSM 15013).